The sequence spans 331 residues: Anthranilate phosphoribosyltransferase (331 aa).

Residues Gly79, 82 to 83 (GD), Thr87, 89 to 92 (NIST), 107 to 115 (KHGNYGATS), and Ala119 contribute to the 5-phospho-alpha-D-ribose 1-diphosphate site. Gly79 is an anthranilate binding site. Residue Ser91 participates in Mg(2+) binding. Asn110 is an anthranilate binding site. Residue Arg165 coordinates anthranilate. Mg(2+)-binding residues include Asp223 and Glu224.

Belongs to the anthranilate phosphoribosyltransferase family. Homodimer. Mg(2+) is required as a cofactor.

The enzyme catalyses N-(5-phospho-beta-D-ribosyl)anthranilate + diphosphate = 5-phospho-alpha-D-ribose 1-diphosphate + anthranilate. Its pathway is amino-acid biosynthesis; L-tryptophan biosynthesis; L-tryptophan from chorismate: step 2/5. Catalyzes the transfer of the phosphoribosyl group of 5-phosphorylribose-1-pyrophosphate (PRPP) to anthranilate to yield N-(5'-phosphoribosyl)-anthranilate (PRA). The protein is Anthranilate phosphoribosyltransferase of Bacteroides fragilis (strain ATCC 25285 / DSM 2151 / CCUG 4856 / JCM 11019 / LMG 10263 / NCTC 9343 / Onslow / VPI 2553 / EN-2).